A 272-amino-acid chain; its full sequence is TIP41-like protein (272 aa).

Lys106 bears the N6-acetyllysine mark. Positions 173 to 272 (RVMPSSFFLL…ADSQKSTQVE (100 aa)) are interaction with PPP2CA. Phosphoserine is present on Ser265.

It belongs to the TIP41 family. In terms of assembly, isoform 1 interacts with PPP2CA. Isoform 2 does not interact with PPP2CA. Interacts with PPP2CB, PPP4C and PPP6C. Interacts with IGBP1; the interaction is dependent on PPP2CA. Associates with a protein phosphatase 2A PP2A(C):IGBP1 complex. Interacts with PPP4C and PPP4R2.

It is found in the cytoplasm. May be a allosteric regulator of serine/threonine-protein phosphatase 2A (PP2A). Isoform 1 inhibits catalytic activity of the PP2A(D) core complex in vitro. The PP2A(C):TIPRL complex does not show phosphatase activity. Acts as a negative regulator of serine/threonine-protein phosphatase 4 probably by inhibiting the formation of the active PPP4C:PPP4R2 complex; the function is proposed to implicate it in DNA damage response by promoting H2AX phosphorylated on Ser-140 (gamma-H2AX). May play a role in the regulation of ATM/ATR signaling pathway controlling DNA replication and repair. The protein is TIP41-like protein (TIPRL) of Homo sapiens (Human).